Here is an 89-residue protein sequence, read N- to C-terminus: Small ribosomal subunit protein uS15 (89 aa).

A compositionally biased stretch (basic and acidic residues) spans 1 to 18 (MSLDTAEKQKLIENHQVH). The segment at 1 to 23 (MSLDTAEKQKLIENHQVHPTDTG) is disordered.

It belongs to the universal ribosomal protein uS15 family. Part of the 30S ribosomal subunit. Forms a bridge to the 50S subunit in the 70S ribosome, contacting the 23S rRNA.

Its function is as follows. One of the primary rRNA binding proteins, it binds directly to 16S rRNA where it helps nucleate assembly of the platform of the 30S subunit by binding and bridging several RNA helices of the 16S rRNA. In terms of biological role, forms an intersubunit bridge (bridge B4) with the 23S rRNA of the 50S subunit in the ribosome. This Prochlorococcus marinus (strain AS9601) protein is Small ribosomal subunit protein uS15.